A 402-amino-acid polypeptide reads, in one-letter code: Exodeoxyribonuclease 7 large subunit (402 aa).

This sequence belongs to the XseA family. In terms of assembly, heterooligomer composed of large and small subunits.

The protein localises to the cytoplasm. The enzyme catalyses Exonucleolytic cleavage in either 5'- to 3'- or 3'- to 5'-direction to yield nucleoside 5'-phosphates.. In terms of biological role, bidirectionally degrades single-stranded DNA into large acid-insoluble oligonucleotides, which are then degraded further into small acid-soluble oligonucleotides. The protein is Exodeoxyribonuclease 7 large subunit of Moorella thermoacetica (strain ATCC 39073 / JCM 9320).